Here is a 1404-residue protein sequence, read N- to C-terminus: DNA-directed RNA polymerase subunit beta' (1404 aa).

Positions 70, 72, 85, and 88 each coordinate Zn(2+). Mg(2+)-binding residues include D460, D462, and D464. Residues C814, C889, C896, and C899 each coordinate Zn(2+).

This sequence belongs to the RNA polymerase beta' chain family. The RNAP catalytic core consists of 2 alpha, 1 beta, 1 beta' and 1 omega subunit. When a sigma factor is associated with the core the holoenzyme is formed, which can initiate transcription. It depends on Mg(2+) as a cofactor. Requires Zn(2+) as cofactor.

It carries out the reaction RNA(n) + a ribonucleoside 5'-triphosphate = RNA(n+1) + diphosphate. Its function is as follows. DNA-dependent RNA polymerase catalyzes the transcription of DNA into RNA using the four ribonucleoside triphosphates as substrates. The sequence is that of DNA-directed RNA polymerase subunit beta' from Xanthomonas axonopodis pv. citri (strain 306).